We begin with the raw amino-acid sequence, 329 residues long: Malate dehydrogenase 2 (329 aa).

Gly-12 to Ala-18 is a binding site for NAD(+). 2 residues coordinate substrate: Arg-93 and Arg-99. NAD(+)-binding positions include Asn-106, Gln-113, and Val-130–Asn-132. Residues Asn-132 and Arg-163 each contribute to the substrate site. The active-site Proton acceptor is the His-188.

Belongs to the LDH/MDH superfamily. MDH type 2 family.

The enzyme catalyses (S)-malate + NAD(+) = oxaloacetate + NADH + H(+). Catalyzes the reversible oxidation of malate to oxaloacetate. This is Malate dehydrogenase 2 from Burkholderia thailandensis (strain ATCC 700388 / DSM 13276 / CCUG 48851 / CIP 106301 / E264).